A 310-amino-acid chain; its full sequence is 4-hydroxyproline epimerase (310 aa).

The Proton acceptor role is filled by C88. Substrate is bound by residues 89–90, H208, and D232; that span reads GH. The Proton donor role is filled by C236. Position 237 to 238 (237 to 238) interacts with substrate; it reads GT.

Belongs to the proline racemase family. As to quaternary structure, homodimer.

It catalyses the reaction trans-4-hydroxy-L-proline = cis-4-hydroxy-D-proline. Its function is as follows. Allows intracellular utilization of 4-hydroxyproline, one of the major constituents of host collagen, by converting 4-hydroxy-L-proline to 4-hydroxy-D-proline, which can be further metabolized by intracellular 4-hydroxy-D-proline oxidases. This chain is 4-hydroxyproline epimerase, found in Burkholderia cenocepacia (strain HI2424).